Consider the following 76-residue polypeptide: Alpha/kappa-conotoxin-like fe14.2 (76 aa).

Positions 1-24 (MPSVRSVTCCCLLWMMLSVQLVTP) are cleaved as a signal peptide. Residues 25 to 39 (GSPGTAQLSGQRTAR) constitute a propeptide that is removed on maturation. Cystine bridges form between C46-C61 and C50-C63. R64 is modified (arginine amide). Residues 65–76 (GKRDVVSSSMAV) constitute a propeptide that is removed on maturation.

This sequence belongs to the conotoxin J superfamily. As to expression, expressed by the venom duct.

The protein localises to the secreted. Functionally, highly inhibits both nicotinic acetylcholine receptors (neuronal (alpha-3/beta-4) and muscular (alpha-1/beta-1/epsilon/delta) subtypes) and the voltage-gated potassium channel Kv1.6/KCNA6 subtype. The protein is Alpha/kappa-conotoxin-like fe14.2 of Conus ferrugineus (Cone snail).